Consider the following 73-residue polypeptide: Carboxysome shell vertex protein CsoS4B (73 aa).

Residues 1-68 (MVCTQRVAGL…TDLTIGGIID (68 aa)) enclose the BMV domain.

This sequence belongs to the CcmL/EutN family. CsoS4 subfamily. In terms of assembly, homopentamer.

The protein localises to the carboxysome. In terms of biological role, probably forms vertices in the carboxysome, a polyhedral inclusion where RuBisCO (ribulose bisphosphate carboxylase, cbbL-cbbS) is sequestered. Has been modeled to induce curvature upon insertion into an otherwise flat hexagonal layer of major carboxysome subunits. Has not been identified in purified carboxysomes; it is expected to be present in very low amounts. The polypeptide is Carboxysome shell vertex protein CsoS4B (Prochlorococcus marinus subsp. pastoris (strain CCMP1986 / NIES-2087 / MED4)).